The chain runs to 430 residues: Cytochrome P450 monooxygenase FGSG_15680 (430 aa).

A heme-binding site is contributed by Cys-351.

This sequence belongs to the cytochrome P450 family. Heme is required as a cofactor.

It participates in mycotoxin biosynthesis. Functionally, cytochrome P450 monooxygenase; part of the gene cluster that mediates the biosynthesis of gramillins A and B, bicyclic lipopeptides that induce cell death in maize leaves but not in wheat leaves. The nonribosomal peptide synthetase GRA1 incorporates respectively a glutamic adic (Glu), a leucine (Leu), a serine (Ser), a hydroxyglutamine (HOGln), a 2-amino decanoic acid, and 2 cysteins (CysB and CysA). The biosynthesis of 2-amino decanoic acid incorporated in gramillins could be initiated by a fatty acid synthase composed of the alpha and beta subunits FGSG_00036 and FGSG_11656. The cytochrome P450 monooxygenase FGSG_15680 could hydroxylate the fatty acid chain. Subsequent oxidation to the ketone by the oxidoreductase FGSG_00048 and transamination by aminotransferase FGSG_00049 could form 2-amino-decanoic acid. On the other hand, FGSG_15680 could also be responsible for the HO-modified glutamine at the gamma-position. Whether hydroxylation occurs on the fully assembled product or on the Gln residue prior to assembly into the gramillins requires further proof. The thioredoxin FGSG_00043 could also be required for the disulfide-bond formation between CysA and CysB. The specific involvement of the remaining proteins from the cluster is more difficult to discern, but could have broader regulatory (FGSG_00040 and FGSG_11657) or enzymatic functions (FGSG_00044 and FGSG_00045). The final C-domain of GRA1 does not possess the expected sequence of a termination CT domain, often implicated in macrocyclization and release of a cyclopeptidein fungal NRPs; and the thioesterase FGSG_00047 may act in concert with the terminal C-domain of GRA1 to catalyze the formation of the macrocyclic anhydride and release of the products. The chain is Cytochrome P450 monooxygenase FGSG_15680 from Gibberella zeae (strain ATCC MYA-4620 / CBS 123657 / FGSC 9075 / NRRL 31084 / PH-1) (Wheat head blight fungus).